Consider the following 473-residue polypeptide: uncharacterized protein (473 aa).

The SET domain occupies 26–254 (PKLYIASSGV…KMSEIFNSFG (229 aa)).

This is an uncharacterized protein from Schizosaccharomyces pombe (strain 972 / ATCC 24843) (Fission yeast).